Here is a 128-residue protein sequence, read N- to C-terminus: Ribonuclease pancreatic (128 aa).

Over residues 1-13 (GESRAEKFQRQHM) the composition is skewed to basic and acidic residues. The disordered stretch occupies residues 1–24 (GESRAEKFQRQHMDSGSSPSSSST). Residues K7 and R10 each coordinate substrate. The active-site Proton acceptor is H12. Intrachain disulfides connect C26-C84, C40-C95, C58-C110, and C65-C72. Residue N34 is glycosylated (N-linked (GlcNAc...) asparagine). Substrate contacts are provided by residues 41 to 45 (KSVNT), K66, and R85. Residue H119 is the Proton donor of the active site.

This sequence belongs to the pancreatic ribonuclease family. As to quaternary structure, monomer. Interacts with and forms tight 1:1 complexes with RNH1. Dimerization of two such complexes may occur. Interaction with RNH1 inhibits this protein. In terms of tissue distribution, pancreas and other tissues and body fluids (indicating it may have other physiological functions besides its role in digestion).

It is found in the secreted. The catalysed reaction is an [RNA] containing cytidine + H2O = an [RNA]-3'-cytidine-3'-phosphate + a 5'-hydroxy-ribonucleotide-3'-[RNA].. The enzyme catalyses an [RNA] containing uridine + H2O = an [RNA]-3'-uridine-3'-phosphate + a 5'-hydroxy-ribonucleotide-3'-[RNA].. In terms of biological role, endonuclease that catalyzes the cleavage of RNA on the 3' side of pyrimidine nucleotides. Acts on single-stranded and double-stranded RNA. This chain is Ribonuclease pancreatic (RNASE1), found in Semnopithecus entellus (Northern plains gray langur).